The sequence spans 169 residues: MIILGIDPGIAIVGYGIIEYKNSKFKAIDYGAVTTPAHMNISRRLELVYKGIDTIVKNYNIDEVGMEELFFNKNVKTAITVAQARGVTMLACAHNGKPVYEYTPLQVKQGVVGYGRADKAQVQQMVTSFLSLKKVPKPDDVADALAVAICHAHSNKLEKTLKNIGGKYV.

Residues Asp7, Glu67, and Asp140 contribute to the active site. Mg(2+) contacts are provided by Asp7, Glu67, and Asp140.

Belongs to the RuvC family. Homodimer which binds Holliday junction (HJ) DNA. The HJ becomes 2-fold symmetrical on binding to RuvC with unstacked arms; it has a different conformation from HJ DNA in complex with RuvA. In the full resolvosome a probable DNA-RuvA(4)-RuvB(12)-RuvC(2) complex forms which resolves the HJ. Mg(2+) is required as a cofactor.

It is found in the cytoplasm. The enzyme catalyses Endonucleolytic cleavage at a junction such as a reciprocal single-stranded crossover between two homologous DNA duplexes (Holliday junction).. In terms of biological role, the RuvA-RuvB-RuvC complex processes Holliday junction (HJ) DNA during genetic recombination and DNA repair. Endonuclease that resolves HJ intermediates. Cleaves cruciform DNA by making single-stranded nicks across the HJ at symmetrical positions within the homologous arms, yielding a 5'-phosphate and a 3'-hydroxyl group; requires a central core of homology in the junction. The consensus cleavage sequence is 5'-(A/T)TT(C/G)-3'. Cleavage occurs on the 3'-side of the TT dinucleotide at the point of strand exchange. HJ branch migration catalyzed by RuvA-RuvB allows RuvC to scan DNA until it finds its consensus sequence, where it cleaves and resolves the cruciform DNA. The chain is Crossover junction endodeoxyribonuclease RuvC from Clostridioides difficile (strain 630) (Peptoclostridium difficile).